Consider the following 412-residue polypeptide: Multifunctional CCA protein (412 aa).

ATP is bound by residues G8 and R11. Positions 8 and 11 each coordinate CTP. Residues D21 and D23 each coordinate Mg(2+). The ATP site is built by R91, R137, and R140. Positions 91, 137, and 140 each coordinate CTP. The HD domain maps to 225-326 (TGIHVMMVID…ADMLQATDAY (102 aa)).

The protein belongs to the tRNA nucleotidyltransferase/poly(A) polymerase family. Bacterial CCA-adding enzyme type 1 subfamily. In terms of assembly, monomer. Can also form homodimers and oligomers. Mg(2+) serves as cofactor. The cofactor is Ni(2+).

The catalysed reaction is a tRNA precursor + 2 CTP + ATP = a tRNA with a 3' CCA end + 3 diphosphate. The enzyme catalyses a tRNA with a 3' CCA end + 2 CTP + ATP = a tRNA with a 3' CCACCA end + 3 diphosphate. Its function is as follows. Catalyzes the addition and repair of the essential 3'-terminal CCA sequence in tRNAs without using a nucleic acid template. Adds these three nucleotides in the order of C, C, and A to the tRNA nucleotide-73, using CTP and ATP as substrates and producing inorganic pyrophosphate. tRNA 3'-terminal CCA addition is required both for tRNA processing and repair. Also involved in tRNA surveillance by mediating tandem CCA addition to generate a CCACCA at the 3' terminus of unstable tRNAs. While stable tRNAs receive only 3'-terminal CCA, unstable tRNAs are marked with CCACCA and rapidly degraded. This chain is Multifunctional CCA protein, found in Nitrosomonas eutropha (strain DSM 101675 / C91 / Nm57).